The following is an 800-amino-acid chain: Phosphate transporter PHO1 homolog 9 (800 aa).

The SPX domain maps to 1–346 (MKFGREFETQ…SRNASKPYLN (346 aa)). The Cytoplasmic portion of the chain corresponds to 1–398 (MKFGREFETQ…KTKREKHRIT (398 aa)). Disordered stretches follow at residues 38–77 (QKQQ…PGLS), 91–119 (NRAS…HNHH), and 212–234 (PDLN…PAPS). The span at 42-51 (RPPPPPPPPS) shows a compositional bias: pro residues. Gly residues predominate over residues 63 to 75 (GEGGGGGGGGGPG). Residues 95–119 (RSPKKSHKHHNPLSSKRHHHHHNHH) show a composition bias toward basic residues. Polar residues predominate over residues 216-229 (SVASAPSSPHSTMR). A helical transmembrane segment spans residues 399 to 419 (YFLGFFSGCAVALAIAITVLV). Residues 420-439 (HIRGLTKSEGRHQYMENIFP) lie on the Extracellular side of the membrane. Residues 440–460 (LYSLFGFVAVHLFMYAADIYF) traverse the membrane as a helical segment. Residues 461–483 (WSRYRVNYPFIFGFEQGNDLGYR) lie on the Cytoplasmic side of the membrane. Residues 484 to 504 (EVLLVGSGLAVLTFGGVISNL) traverse the membrane as a helical segment. Over 505 to 520 (DMEMDPRTKSFSVITE) the chain is Extracellular. The chain crosses the membrane as a helical span at residues 521–541 (LVPLALLVCLMMVLFCPFNII). At 542–670 (YRSSRYFFVG…IFEMKRGTYW (129 aa)) the chain is on the cytoplasmic side. In terms of domain architecture, EXS spans 606-800 (YDSEIYKELY…FQELGGSKSV (195 aa)). A helical transmembrane segment spans residues 671–691 (LTVAVTTSSIATLFNTYWDIF). The Extracellular segment spans residues 692–718 (RDWGLMNRNSKNPWLRDKLLVPYKSIY). The helical transmembrane segment at 719–739 (FIVMVANVVLRLAWMQTVLGI) threads the bilayer. The Cytoplasmic portion of the chain corresponds to 740–800 (KEAPFLHKRA…FQELGGSKSV (61 aa)).

This sequence belongs to the SYG1 (TC 2.A.94) family. In terms of tissue distribution, specifically expressed in pollen grains.

It is found in the cell membrane. Functionally, may transport inorganic phosphate (Pi). The polypeptide is Phosphate transporter PHO1 homolog 9 (PHO1-H9) (Arabidopsis thaliana (Mouse-ear cress)).